The following is a 498-amino-acid chain: Hexokinase-3 (498 aa).

Residues 4–24 (VAVAFAAVAVVAACSVAAVMV) traverse the membrane as a helical segment. The Hexokinase domain occupies 35–494 (RTVVEILKEL…SSIGSALLVA (460 aa)). Positions 90 to 227 (TGREKGTYYA…GLDMHVAALV (138 aa)) are hexokinase small subdomain. 2 residues coordinate ADP: Gly104 and Thr105. Residues Thr193, Lys194, Asn228, and Asp229 each contribute to the D-glucose site. Residues 228–483 (NDTVGALSLG…QYVVVKAMED (256 aa)) form a hexokinase large subdomain region. Thr252 is a binding site for ADP. 3 residues coordinate D-glucose: Asn255, Glu283, and Glu314. Residue Gly448 coordinates ADP.

It belongs to the hexokinase family. In terms of tissue distribution, expressed in roots, emerging lateral roots, vascular tissues of cotyledons, roots and leaves, root and shoot meristems, anther filaments and funiculi of mature seeds.

The protein resides in the mitochondrion outer membrane. The catalysed reaction is a D-hexose + ATP = a D-hexose 6-phosphate + ADP + H(+). It carries out the reaction D-fructose + ATP = D-fructose 6-phosphate + ADP + H(+). It catalyses the reaction D-glucose + ATP = D-glucose 6-phosphate + ADP + H(+). Its pathway is carbohydrate metabolism; hexose metabolism. It participates in carbohydrate degradation; glycolysis; D-glyceraldehyde 3-phosphate and glycerone phosphate from D-glucose: step 1/4. Its function is as follows. Fructose and glucose phosphorylating enzyme. May be involved in the phosphorylation of glucose during the export from mitochondrion to cytosol. Plays a role in plant growth and development, perhaps by mediating cross-talk between glucose and hormone response pathways. Involved in root hair cell development by mediating certain aspects of cross talk between glucose and ethylene response pathways. This chain is Hexokinase-3, found in Arabidopsis thaliana (Mouse-ear cress).